The following is a 92-amino-acid chain: Putative phosphotransferase enzyme IIB component BB_0367 (92 aa).

One can recognise a PTS EIIB type-1 domain in the interval 10 to 92; sequence IKVAEHIVEC…ILYMMNEQKQ (83 aa).

It is found in the cytoplasm. Its function is as follows. The phosphoenolpyruvate-dependent sugar phosphotransferase system (PTS), a major carbohydrate active -transport system, catalyzes the phosphorylation of incoming sugar substrates concomitant with their translocation across the cell membrane. This Borreliella burgdorferi (strain ATCC 35210 / DSM 4680 / CIP 102532 / B31) (Borrelia burgdorferi) protein is Putative phosphotransferase enzyme IIB component BB_0367.